The primary structure comprises 419 residues: Carboxypeptidase A1 (419 aa).

The N-terminal stretch at 1–16 is a signal peptide; it reads MKRLLVLSVLLAAVFG. Positions 17–110 are cleaved as a propeptide — activation peptide; the sequence is NENFVGHQVL…KQQMSAFQAR (94 aa). In terms of domain architecture, Peptidase M14 spans 121–414; sequence TYHTLDEIYE…LALLTIMDHT (294 aa). Residues H179 and E182 each contribute to the Zn(2+) site. Residues 179–182, R237, and 254–255 each bind substrate; these read HSRE and NR. A disulfide bridge connects residues C248 and C271. Residue H306 coordinates Zn(2+). Substrate is bound by residues 307 to 308 and Y358; that span reads SY. Residue E380 is the Proton donor/acceptor of the active site.

Belongs to the peptidase M14 family. In terms of assembly, monomer. The cofactor is Zn(2+).

Its subcellular location is the secreted. It carries out the reaction Release of a C-terminal amino acid, but little or no action with -Asp, -Glu, -Arg, -Lys or -Pro.. Its function is as follows. Carboxypeptidase that catalyzes the release of a C-terminal amino acid, but has little or no action with -Asp, -Glu, -Arg, -Lys or -Pro. In Mus musculus (Mouse), this protein is Carboxypeptidase A1 (Cpa1).